The following is a 182-amino-acid chain: Methionine-R-sulfoxide reductase B2, mitochondrial (182 aa).

The transit peptide at 1–20 directs the protein to the mitochondrion; sequence MARLLWLLRGLTLGTAPRRA. The MsrB domain occupies 51–180; that stretch reads KSEWQKKLTP…NSVALKFKPR (130 aa). Residues C90, C93, C146, and C149 each coordinate Zn(2+). C169 serves as the catalytic Nucleophile.

It belongs to the MsrB Met sulfoxide reductase family. In terms of assembly, interacts with DAOA; the interaction is direct. The cofactor is Zn(2+). As to expression, ubiquitous. Detected in retina, ocular ciliary body, skeletal muscle, heart, colon, bone marrow, cerebellum, small intestine, fetal brain, fetal liver, kidney, spinal cord, lung, placenta and prostate.

Its subcellular location is the mitochondrion. It catalyses the reaction L-methionyl-[protein] + [thioredoxin]-disulfide + H2O = L-methionyl-(R)-S-oxide-[protein] + [thioredoxin]-dithiol. It carries out the reaction [thioredoxin]-disulfide + L-methionine + H2O = L-methionine (R)-S-oxide + [thioredoxin]-dithiol. Methionine-sulfoxide reductase that specifically reduces methionine (R)-sulfoxide back to methionine. While in many cases, methionine oxidation is the result of random oxidation following oxidative stress, methionine oxidation is also a post-translational modification that takes place on specific residue. Upon oxidative stress, may play a role in the preservation of mitochondrial integrity by decreasing the intracellular reactive oxygen species build-up through its scavenging role, hence contributing to cell survival and protein maintenance. The polypeptide is Methionine-R-sulfoxide reductase B2, mitochondrial (MSRB2) (Homo sapiens (Human)).